A 125-amino-acid chain; its full sequence is Small ribosomal subunit protein uS13 (125 aa).

The interval 95–125 (GLPLRGQRTKTNARTRKGKRKTVANKKIASK) is disordered.

The protein belongs to the universal ribosomal protein uS13 family. In terms of assembly, part of the 30S ribosomal subunit. Forms a loose heterodimer with protein S19. Forms two bridges to the 50S subunit in the 70S ribosome.

In terms of biological role, located at the top of the head of the 30S subunit, it contacts several helices of the 16S rRNA. In the 70S ribosome it contacts the 23S rRNA (bridge B1a) and protein L5 of the 50S subunit (bridge B1b), connecting the 2 subunits; these bridges are implicated in subunit movement. Contacts the tRNAs in the A and P-sites. The sequence is that of Small ribosomal subunit protein uS13 from Borreliella burgdorferi (strain ATCC 35210 / DSM 4680 / CIP 102532 / B31) (Borrelia burgdorferi).